The primary structure comprises 101 residues: Small ribosomal subunit protein uS14 (101 aa).

Belongs to the universal ribosomal protein uS14 family. Part of the 30S ribosomal subunit. Contacts proteins S3 and S10.

In terms of biological role, binds 16S rRNA, required for the assembly of 30S particles and may also be responsible for determining the conformation of the 16S rRNA at the A site. In Erythrobacter litoralis (strain HTCC2594), this protein is Small ribosomal subunit protein uS14.